The chain runs to 99 residues: MAHLSLNQYKCTHIIIHGTCLSGLYPVPFTHNAHDYPHFNIYISFGGPKYCKTALNTYVIPLLHRILTTQFIYTYANITEKSPPKSPKHKNILSFNNNT.

The disordered stretch occupies residues 80 to 99 (EKSPPKSPKHKNILSFNNNT).

This sequence belongs to the UPF0320 family.

The chain is Putative UPF0320 protein YDR543C from Saccharomyces cerevisiae (strain ATCC 204508 / S288c) (Baker's yeast).